A 403-amino-acid chain; its full sequence is ATP phosphoribosyltransferase regulatory subunit (403 aa).

Belongs to the class-II aminoacyl-tRNA synthetase family. HisZ subfamily. As to quaternary structure, heteromultimer composed of HisG and HisZ subunits.

The protein resides in the cytoplasm. It participates in amino-acid biosynthesis; L-histidine biosynthesis; L-histidine from 5-phospho-alpha-D-ribose 1-diphosphate: step 1/9. Its function is as follows. Required for the first step of histidine biosynthesis. May allow the feedback regulation of ATP phosphoribosyltransferase activity by histidine. The protein is ATP phosphoribosyltransferase regulatory subunit of Nostoc punctiforme (strain ATCC 29133 / PCC 73102).